The primary structure comprises 349 residues: NADP-dependent alcohol dehydrogenase C 1 (349 aa).

The Zn(2+) site is built by cysteine 41, histidine 63, cysteine 94, cysteine 97, cysteine 100, cysteine 108, and cysteine 159. Lysine 210 is covalently cross-linked (Isoglutamyl lysine isopeptide (Lys-Gln) (interchain with Q-Cter in protein Pup)).

This sequence belongs to the zinc-containing alcohol dehydrogenase family. Requires Zn(2+) as cofactor.

The enzyme catalyses a primary alcohol + NADP(+) = an aldehyde + NADPH + H(+). Prefers aldehydes over alcohols. The polypeptide is NADP-dependent alcohol dehydrogenase C 1 (adhc1) (Mycolicibacterium smegmatis (strain ATCC 700084 / mc(2)155) (Mycobacterium smegmatis)).